The primary structure comprises 374 residues: Heptahelical transmembrane protein 5 (374 aa).

At 1–79 (MGDEAEIKEH…LSIFTIHNET (79 aa)) the chain is on the cytoplasmic side. A helical transmembrane segment spans residues 80-100 (LNVWTHLIGFFLFLALTIYTA). The Extracellular portion of the chain corresponds to 101-191 (TKVPSVVDLH…LIFRPITRWP (91 aa)). Residues 192 to 212 (FYAFLGGAIFCLLASSTCHLL) form a helical membrane-spanning segment. Residues 213-228 (SCHSERVSYIMLRLDY) lie on the Cytoplasmic side of the membrane. The helical transmembrane segment at 229 to 249 (AGIAALIATSFYPPVYYSFMC) threads the bilayer. The Extracellular segment spans residues 250 to 256 (DPFFCNL). A helical transmembrane segment spans residues 257–277 (YLGFITILGIATVLVSLLPVF). Topologically, residues 278 to 288 (QSLEFRVVRAS) are cytoplasmic. The chain crosses the membrane as a helical span at residues 289-309 (LFFGMGFSGLAPILHKLIIFW). The Extracellular portion of the chain corresponds to 310-313 (DQPE). The chain crosses the membrane as a helical span at residues 314-334 (ALHMTGYEILMGLLYGLGAVV). The Cytoplasmic segment spans residues 335-347 (YATRIPERWMPGK). The helical transmembrane segment at 348 to 368 (FDIAGHSHQLFHVLVVAGALT) threads the bilayer. Topologically, residues 369–374 (HYRAGL) are extracellular.

This sequence belongs to the ADIPOR family. In terms of tissue distribution, expressed in roots, leaves, stems and flowers.

It is found in the membrane. Functionally, may play a role in abiotic stress response. This Arabidopsis thaliana (Mouse-ear cress) protein is Heptahelical transmembrane protein 5 (HHP5).